Here is a 625-residue protein sequence, read N- to C-terminus: Endoglucanase D (625 aa).

Positions 1–17 are cleaved as a signal peptide; that stretch reads SLTGVFPSGLIETKVSA. Catalysis depends on D177, which acts as the Nucleophile. Residues H492 and D522 contribute to the active site. Residue E531 is the Proton donor of the active site. Residues 555–625 form the Dockerin domain; the sequence is NEVLYGDVND…LIRVIEKLPI (71 aa).

This sequence belongs to the glycosyl hydrolase 9 (cellulase E) family. The cofactor is Ca(2+).

It catalyses the reaction Endohydrolysis of (1-&gt;4)-beta-D-glucosidic linkages in cellulose, lichenin and cereal beta-D-glucans.. Its function is as follows. This enzyme catalyzes the endohydrolysis of 1,4-beta-glucosidic linkages in cellulose, lichenin and cereal beta-D-glucans. The sequence is that of Endoglucanase D (celD) from Acetivibrio thermocellus (Hungateiclostridium thermocellum).